Reading from the N-terminus, the 475-residue chain is 7-dehydrocholesterol reductase (475 aa).

Residues methionine 1–glycine 21 are disordered. Serine 14 is subject to Phosphoserine. The next 6 membrane-spanning stretches (helical) occupy residues leucine 40–alanine 60, tryptophan 151–isoleucine 173, isoleucine 178–tyrosine 200, valine 266–tryptophan 286, leucine 306–valine 326, and glutamine 331–phenylalanine 351. Residues lysine 358, arginine 362, leucine 395, tryptophan 400, and asparagine 407 to tyrosine 408 contribute to the NADP(+) site. Residues leucine 420–leucine 440 traverse the membrane as a helical segment. Residues aspartate 447, cysteine 451–tyrosine 455, and tyrosine 462 contribute to the NADP(+) site.

The protein belongs to the ERG4/ERG24 family. Interacts with DHCR24; this interaction regulates DHCR7 activity. Interacts with TMEM147.

It is found in the endoplasmic reticulum membrane. It catalyses the reaction cholesterol + NADP(+) = 7-dehydrocholesterol + NADPH + H(+). It carries out the reaction 7-dehydrodesmosterol + NADPH + H(+) = desmosterol + NADP(+). The catalysed reaction is 5,6alpha-epoxy-5alpha-cholestan-3beta-ol + H2O = 5alpha-cholestane-3beta,5,6beta-triol. The enzyme catalyses 5,6beta-epoxy-5beta-cholestan-3beta-ol + H2O = 5alpha-cholestane-3beta,5,6beta-triol. It functions in the pathway steroid biosynthesis; cholesterol biosynthesis. Oxidoreductase that catalyzes the last step of the cholesterol synthesis pathway, which transforms cholesta-5,7-dien-3beta-ol (7-dehydrocholesterol,7-DHC) into cholesterol by reducing the C7-C8 double bond of its sterol core. Can also metabolize cholesta-5,7,24-trien-3beta-ol (7-dehydrodemosterol, 7-DHD) to desmosterol, which is then metabolized by the Delta(24)-sterol reductase (DHCR24) to cholesterol. Modulates ferroptosis (a form of regulated cell death driven by iron-dependent lipid peroxidation) through the metabolic breakdown of the anti-ferroptotic metabolites 7-DHC and 7-DHD which, when accumulated, divert the propagation of peroxyl radical-mediated damage from phospholipid components to its sterol core, protecting plasma and mitochondrial membranes from phospholipid autoxidation. Its function is as follows. Component of the microsomal antiestrogen binding site (AEBS), a multiproteic complex at the ER membrane that consists of an association between cholestenol Delta-isomerase/EBP and DHCR7. This complex is responsible for cholesterol-5,6-epoxide hydrolase (ChEH) activity, which consists in the hydration of cholesterol-5,6-epoxides (5,6-EC) into cholestane-3beta,5alpha,6beta-triol (CT). The precise role of each component of this complex has not been described yet. This Bos taurus (Bovine) protein is 7-dehydrocholesterol reductase (DHCR7).